Here is a 159-residue protein sequence, read N- to C-terminus: Aphid transmission protein (159 aa).

The protein belongs to the caulimoviridae ORF II family.

This protein is involved in virus transmission. The polypeptide is Aphid transmission protein (Cauliflower mosaic virus (strain PV147) (CaMV)).